Reading from the N-terminus, the 264-residue chain is Thymidylate synthase (264 aa).

Residues Arg-21 and 126-127 (RR) contribute to the dUMP site. The active-site Nucleophile is the Cys-146. Residues 166–169 (RSAD), Asn-177, and 207–209 (HLY) contribute to the dUMP site. Asp-169 contributes to the (6R)-5,10-methylene-5,6,7,8-tetrahydrofolate binding site. (6R)-5,10-methylene-5,6,7,8-tetrahydrofolate is bound at residue Ala-263.

It belongs to the thymidylate synthase family. Bacterial-type ThyA subfamily. In terms of assembly, homodimer.

The protein localises to the cytoplasm. The enzyme catalyses dUMP + (6R)-5,10-methylene-5,6,7,8-tetrahydrofolate = 7,8-dihydrofolate + dTMP. The protein operates within pyrimidine metabolism; dTTP biosynthesis. Its function is as follows. Catalyzes the reductive methylation of 2'-deoxyuridine-5'-monophosphate (dUMP) to 2'-deoxythymidine-5'-monophosphate (dTMP) while utilizing 5,10-methylenetetrahydrofolate (mTHF) as the methyl donor and reductant in the reaction, yielding dihydrofolate (DHF) as a by-product. This enzymatic reaction provides an intracellular de novo source of dTMP, an essential precursor for DNA biosynthesis. The polypeptide is Thymidylate synthase (Rhodopseudomonas palustris (strain ATCC BAA-98 / CGA009)).